The following is a 1009-amino-acid chain: 2-oxoglutarate dehydrogenase, mitochondrial (1009 aa).

Residues 1 to 39 constitute a mitochondrion transit peptide; the sequence is MLRFIPSSAKARALRRSAVTAYRLNRLTCLSSLQQNRTF. Thiamine diphosphate-binding residues include R305, D404, N437, I439, and Q669. Mg(2+) contacts are provided by D404, N437, and I439.

The protein belongs to the alpha-ketoglutarate dehydrogenase family. The cofactor is thiamine diphosphate. Mg(2+) serves as cofactor.

The protein localises to the mitochondrion matrix. The catalysed reaction is N(6)-[(R)-lipoyl]-L-lysyl-[protein] + 2-oxoglutarate + H(+) = N(6)-[(R)-S(8)-succinyldihydrolipoyl]-L-lysyl-[protein] + CO2. Catabolite repressed. Its function is as follows. The 2-oxoglutarate dehydrogenase complex catalyzes the overall conversion of 2-oxoglutarate to succinyl-CoA and CO(2). It contains multiple copies of three enzymatic components: 2-oxoglutarate dehydrogenase (E1), dihydrolipoamide succinyltransferase (E2) and lipoamide dehydrogenase (E3). This chain is 2-oxoglutarate dehydrogenase, mitochondrial (kgd1), found in Schizosaccharomyces pombe (strain 972 / ATCC 24843) (Fission yeast).